Here is a 561-residue protein sequence, read N- to C-terminus: Delta(24)-sterol reductase (561 aa).

The Lumenal portion of the chain corresponds to 1-25 (MSDLQTPLVRPKRKKTWVDYFVKFR). Serine 2 is subject to Phosphoserine. A helical; Signal-anchor transmembrane segment spans residues 26-46 (WIIVIFIVLPFSATFYFLIYL). At 47-561 (GDMWSESKSF…HLETAYAEAD (515 aa)) the chain is on the cytoplasmic side. The region spanning 49 to 232 (MWSESKSFEK…VAAEIRLIKV (184 aa)) is the FAD-binding PCMH-type domain. The tract at residues 518–539 (CRKKYRAIGTFMSVYYKSKKGR) is interaction with calmodulin.

Belongs to the DIMINUTO family. Interacts with calmodulin.

The protein localises to the microsome membrane. It catalyses the reaction lathosterol + NADP(+) = 5alpha-cholesta-7,24-dien-3beta-ol + NADPH + H(+). Plays a critical role in the general process of plant cell elongation. Involved in the synthesis of campesterol, an early precursor of brassinolide. Required for the conversion of 24-methylenecholesterol to campesterol and for the conversion of isofucosterol to sitosterol. Necessary for both the isomerization and reduction of 24-methylenecholesterol. Regulates indirectly phytochrome-mediated light responses through the modulation of brassinosteroid biosynthesis. The protein is Delta(24)-sterol reductase (DIM) of Arabidopsis thaliana (Mouse-ear cress).